The following is a 343-amino-acid chain: Holliday junction branch migration complex subunit RuvB (343 aa).

The large ATPase domain (RuvB-L) stretch occupies residues Met1–Tyr185. Residues Leu24, Arg25, Gly66, Lys69, Thr70, Thr71, Glu132–Tyr134, Arg175, Tyr185, and Arg222 each bind ATP. Residue Thr70 coordinates Mg(2+). The segment at Ser186 to Asn256 is small ATPAse domain (RuvB-S). Positions Ala259–Asn343 are head domain (RuvB-H). Residues Arg314 and Arg319 each coordinate DNA.

It belongs to the RuvB family. As to quaternary structure, homohexamer. Forms an RuvA(8)-RuvB(12)-Holliday junction (HJ) complex. HJ DNA is sandwiched between 2 RuvA tetramers; dsDNA enters through RuvA and exits via RuvB. An RuvB hexamer assembles on each DNA strand where it exits the tetramer. Each RuvB hexamer is contacted by two RuvA subunits (via domain III) on 2 adjacent RuvB subunits; this complex drives branch migration. In the full resolvosome a probable DNA-RuvA(4)-RuvB(12)-RuvC(2) complex forms which resolves the HJ.

The protein resides in the cytoplasm. It catalyses the reaction ATP + H2O = ADP + phosphate + H(+). Its function is as follows. The RuvA-RuvB-RuvC complex processes Holliday junction (HJ) DNA during genetic recombination and DNA repair, while the RuvA-RuvB complex plays an important role in the rescue of blocked DNA replication forks via replication fork reversal (RFR). RuvA specifically binds to HJ cruciform DNA, conferring on it an open structure. The RuvB hexamer acts as an ATP-dependent pump, pulling dsDNA into and through the RuvAB complex. RuvB forms 2 homohexamers on either side of HJ DNA bound by 1 or 2 RuvA tetramers; 4 subunits per hexamer contact DNA at a time. Coordinated motions by a converter formed by DNA-disengaged RuvB subunits stimulates ATP hydrolysis and nucleotide exchange. Immobilization of the converter enables RuvB to convert the ATP-contained energy into a lever motion, pulling 2 nucleotides of DNA out of the RuvA tetramer per ATP hydrolyzed, thus driving DNA branch migration. The RuvB motors rotate together with the DNA substrate, which together with the progressing nucleotide cycle form the mechanistic basis for DNA recombination by continuous HJ branch migration. Branch migration allows RuvC to scan DNA until it finds its consensus sequence, where it cleaves and resolves cruciform DNA. The protein is Holliday junction branch migration complex subunit RuvB of Christiangramia forsetii (strain DSM 17595 / CGMCC 1.15422 / KT0803) (Gramella forsetii).